The chain runs to 1125 residues: MKRSLRRVLRPEERKEVQGVVYRGVGEDMDCSKESFKVDIEGDMCRLEAFIKNRRKLSKYEDENLCLLHHAAAEGQVELMQLIINGSSCEALNVMDDYGNTPLHWAAEKNQVESVKFLLSQGANPNLRNRNMMAPLHIAVQGMYNEVIKVLTEHKATNINLEGENGNTALMSTCAKDNSEALQILLEKGAKLCKSNKWGDYPVHQAAFSGAKRCMELILAYGEKTGYSREAHINFVNHKKASPLHLAVQSGDLDMIKMCLDSGAHIDMMENAKCMALHFAATQGATDIVKLMISSYTGSSDIVNAVDGNQETLLHRASLFDHHDLADYLISVGADINSTDSEGRSPLILATASASWNIVNLLLSKGAKVDIKDHLGRNFLHLTVQQPYGLRNLRPEFLQMQHIKELVMDEDNDGCTPLHYACRQGAPVSVNNLLRFNVSVHSKSKDKKSPLHFAASYGRINTCQRLLQDISDTRLLNEGDLHGMTPLHLAAKNGHDKVVQLLLKKGALFLSDHNGWTALHHASMGGYTQTMKVILDTNLKCTDRLDEEGNTALHFAAREGHAKAVAMLLSYNADILLNKKQASFLHIALHNKRKEVVLTTIRSKRWDECLQVFTHDSPSNRCPIMEMVEYLPECMKVLLDFCMIPSTEDKSCQDYHIEYNFKYLQCPLSMTKKVTPTQDVIYEPLTILNVMVQHNRIELLNHPVCREYLLMKWCAYGFRAHMMNLGSYCLGLIPMTLLVVKIQPGMAFNSTGIINETISTHEERINTLNSFPLKICMILVFLSSIFGYCKEVVQIFQQKRNYFLDYNNALEWVIYTTSMIFVLPLFLDIPAYMQWQCGAIAIFFYWMNFLLYLQRFENCGIFIVMLEVIFKTLLRSTGVFIFLLLAFGLSFYVLLNFQDAFSTPLLSLIQTFSMMLGDINYRDAFLEPLFRNELAYPVLTFGQLIAFTMFVPIVLMNLLIGLAVGDIAEVQKHASLKRIAMQVELHTNLEKKLPFWYLRKVDQRSTIVYPNRPRHGRMLRFFHYFLSMQETRQEAPNIDTCLEMEILKQKYRLKDLTSLLEKQHELIKLIIQKMEIISETEDEDNHCSFQDRFKKERLEQMHSKWNFVLNAVKTKTHCSISHPDI.

Topologically, residues Met1 to His721 are cytoplasmic. ANK repeat units follow at residues Glu63 to Val94, Tyr98 to Leu127, Asn131 to Leu161, Asn165 to Lys194, Trp198 to Tyr227, Lys239 to Met268, Ala272 to Asp301, Asn309 to Ser338, and Glu342 to Ile371. 5 disulfide bridges follow: Cys193–Cys666, Cys463–Cys666, Cys609–Cys622, Cys622–Cys666, and Cys634–Cys859. Residue Pro395 is modified to 4-hydroxyproline; transient. ANK repeat units follow at residues Asp413–Ser442, Asp446–Leu475, His482–Ser511, Asn514–Asp543, and Glu548–Leu577. (E)-cinnamaldehyde-binding residues include Cys415 and Cys422. Residue Cys622 participates in (E)-cinnamaldehyde binding. Cys634 is subject to Cysteine sulfenic acid (-SOH); transient; in hyperoxia. (E)-cinnamaldehyde is bound by residues Cys642, Cys666, and Lys712. A helical transmembrane segment spans residues Met722–Ile742. The Extracellular segment spans residues Gln743–Thr767. N-linked (GlcNAc...) asparagine glycosylation is found at Asn749 and Asn755. The helical transmembrane segment at Leu768–Tyr788 threads the bilayer. Over Cys789–Tyr806 the chain is Cytoplasmic. Ca(2+) is bound by residues Glu791, Gln794, Asn808, and Glu811. Residues Asn807–Leu827 form a helical membrane-spanning segment. The Extracellular segment spans residues Asp828 to Tyr832. The helical transmembrane segment at Met833–Leu853 threads the bilayer. At Gln854–Ser876 the chain is on the cytoplasmic side. Cysteine sulfenic acid (-SOH); transient; in hyperoxia is present on Cys859. A helical transmembrane segment spans residues Thr877 to Phe897. Topologically, residues Gln898–Pro904 are extracellular. Residues Leu905–Phe925 constitute an intramembrane region (pore-forming). At Leu926–Pro937 the chain is on the extracellular side. Residues Val938–Leu959 form a helical membrane-spanning segment. The Cytoplasmic segment spans residues Ile960–Ile1125. A coiled-coil region spans residues Met1044–Lys1073. Lys1048–Lys1054 provides a ligand contact to a 1,2-diacyl-sn-glycero-3-phospho-(1D-myo-inositol).

The protein belongs to the transient receptor (TC 1.A.4) family. In terms of assembly, homotetramer. Interacts with TMEM100. Interacts with EGLN1. Interacts with the scorpion wasabi receptor toxin at the same site that electrophiles but in a non-covalent manner. TRPA1 activation by electrophiles occurs though covalent modification of specific cysteine residues in the N-terminal cytoplasmic domain. Post-translationally, hydroxylation is required for TRPA1 activity inhibition in normoxia. In hypoxia, the decrease in oxygen concentration diminishes the activity of the hydroxylase EGLN1, thus relieving TRPA1 from inhibition and ultimately leading to channel activation. In terms of processing, oxidation of Cys-634 and Cys-859 in hyperoxia may override the hydroxylase EGLN1-mediated inhibition, causing TRPA1 activation. In terms of tissue distribution, specifically expressed in a subset of nociceptive neurons. Expressed in dorsal root ganglia.

It is found in the cell membrane. It carries out the reaction Ca(2+)(in) = Ca(2+)(out). The enzyme catalyses Mg(2+)(in) = Mg(2+)(out). It catalyses the reaction Na(+)(in) = Na(+)(out). The catalysed reaction is K(+)(in) = K(+)(out). It carries out the reaction Zn(2+)(in) = Zn(2+)(out). With respect to regulation, electrophilic ligands activate the channel by covalent modification of intracellular cysteines; Cys-622 plays a key role in covalent binding of electrophiles. Extracellular Ca(2+) both potentiates and inactivates TRPA1; a rapid potentiation follows by slow desensitization. Activated by increase in intracellular Ca(2+) concentration. Inhibited by ruthenium red, a potent blocker of TRPV channels and selectively by A-967079. Activated by benzyl isothiocyanate (BITC), iodoacetamide, sulfhydryl reactive agent MTSEA, N-methyl maleimide (NMM), N-ethylmaleimide (NEM), and 2-aminoethyldiphenylborinate (2-APB). Also activated by hyperoxia. Acivated by intracellular Zn(2+). TRPA1 activation may critically depend on the presence of small intracellular compounds such as polyphosphates. Ligand-activated Ca(2+)-permeable, nonselective cation channel. Involved in pain detection and possibly also in cold perception, oxygen concentration perception, cough, itch, and inner ear function. Has a relatively high Ca(2+) selectivity, with a preference for divalent over monovalent cations (Ca(2+) &gt; Ba(2+) &gt; Mg(2+) &gt; NH4(+) &gt; Li(+) &gt; K(+)), the influx of cation into the cytoplasm, leads to membrane depolarization. Has a central role in the pain response to endogenous inflammatory mediators, such as bradykinin and to a diverse array of irritants. Activated by a large variety of structurally unrelated electrophilic and non-electrophilic chemical compounds, such as allylthiocyanate (AITC) from mustard oil or wasabi, cinnamaldehyde, diallyl disulfide (DADS) from garlic, and acrolein, an environmental irritant. Electrophilic ligands activate TRPA1 by interacting with critical N-terminal Cys residues in a covalent manner. Non-electrophile agonists bind at distinct sites in the transmembrane domain to promote channel activation. Also acts as an ionotropic cannabinoid receptor by being activated by delta(9)-tetrahydrocannabinol (THC), the psychoactive component of marijuana. May be a component for the mechanosensitive transduction channel of hair cells in inner ear, thereby participating in the perception of sounds. This chain is Transient receptor potential cation channel subfamily A member 1, found in Rattus norvegicus (Rat).